The following is a 196-amino-acid chain: MLERIKVCFTESIQTQIAAAEALPDAISRAAMTLVHSLLNGNKILCCGNGTSAANAQHFAASMINRFETERPSLPAIALNTDNVVLTAIANDRLHDEVYAKQVRALGHAGDVLLAISTRGNSRDIVKAVEAAVTRDMTIVALTGYDGGELAGLLGPQDVEIRIPSHHSARIQEMHMLTVNCLCDLIDNTLFPHQDD.

Positions 34-196 (LVHSLLNGNK…DNTLFPHQDD (163 aa)) constitute an SIS domain.

The protein belongs to the SIS family. DiaA subfamily. As to quaternary structure, homotetramer; dimer of dimers.

Its function is as follows. Required for the timely initiation of chromosomal replication via direct interactions with the DnaA initiator protein. The protein is DnaA initiator-associating protein DiaA of Salmonella enteritidis PT4 (strain P125109).